A 388-amino-acid chain; its full sequence is UDP-galactose transporter senju (388 aa).

Transmembrane regions (helical) follow at residues 13-33 (LTFVIFLLYMSLFIGQGIFVT), 46-66 (TVTVVLLTEVFKLIVSTCLYC), 84-104 (VLGLYMVPAFLYCLYNNLAFV), 113-133 (TYYLLLQLRVVVTGILFQIIF), 142-162 (WISLILLTLGCMMKQVDFGSF), 202-222 (FSLSAVFILAQTICSCLAGVY), 236-256 (IFVQNVFMYLDSIVCNAVILL), 276-296 (FSVLIIIVNNAAIGIVTSFFL), 309-329 (ALELLFTAVLCYFLFSIPIYM), and 331-351 (TALAIAVVSYAIYLYTQSPVV).

It belongs to the nucleotide-sugar transporter family.

It is found in the golgi apparatus membrane. UDP-galactose transporter involved in the synthesis of galactose-containing glycans. Plays a role in quiescence of the innate immune response, possibly by regulating glycosylation of the Toll pathway ligand spz. The chain is UDP-galactose transporter senju from Drosophila melanogaster (Fruit fly).